Reading from the N-terminus, the 396-residue chain is Subtilisin-like protease 5 (396 aa).

An N-terminal signal peptide occupies residues 1 to 20; it reads MTGFFTILSFSLAALSVTNA. The propeptide occupies 21–116; sequence AQILSVPKGA…VEPDAIISQH (96 aa). The region spanning 37-113 is the Inhibitor I9 domain; the sequence is YIVVMKDDTS…VAFVEPDAII (77 aa). N-linked (GlcNAc...) asparagine glycosylation is present at N63. A Peptidase S8 domain is found at 125-396; it reads PWGLSRLSNR…TRLLYNGSGR (272 aa). Active-site charge relay system residues include D156 and H187. Residues N230 and N248 are each glycosylated (N-linked (GlcNAc...) asparagine). The active-site Charge relay system is the S342. Over residues 377-389 the composition is skewed to polar residues; it reads TIRNPGPDTTTRL. Positions 377 to 396 are disordered; that stretch reads TIRNPGPDTTTRLLYNGSGR. N-linked (GlcNAc...) asparagine glycosylation is present at N392.

It belongs to the peptidase S8 family.

It is found in the secreted. In terms of biological role, secreted subtilisin-like serine protease with keratinolytic activity that contributes to pathogenicity. The protein is Subtilisin-like protease 5 (SUB5) of Arthroderma benhamiae (Trichophyton mentagrophytes).